A 477-amino-acid polypeptide reads, in one-letter code: Glycogen synthase (477 aa).

Lys-15 is an ADP-alpha-D-glucose binding site.

Belongs to the glycosyltransferase 1 family. Bacterial/plant glycogen synthase subfamily.

It carries out the reaction [(1-&gt;4)-alpha-D-glucosyl](n) + ADP-alpha-D-glucose = [(1-&gt;4)-alpha-D-glucosyl](n+1) + ADP + H(+). Its pathway is glycan biosynthesis; glycogen biosynthesis. Its function is as follows. Synthesizes alpha-1,4-glucan chains using ADP-glucose. This chain is Glycogen synthase, found in Erwinia tasmaniensis (strain DSM 17950 / CFBP 7177 / CIP 109463 / NCPPB 4357 / Et1/99).